The following is a 520-amino-acid chain: MPGSLPLNAEACWPKDVGIVALEIYFPSQYVDQAELEKYDGVDAGKYTIGLGQARMGFCTDREDINSLCLTVVQNLMERNSLSYDCIGRLEVGTETIIDKSKSVKSNLMQLFEESGNTDIEGIDTTNACYGGTAAVFNAVNWIESSSWDGRYALVVAGDIAIYATGNARPTGGVGAVALLIGPNAPLIFDRGLRGTHMQHAYDFYKPDMLSEYPIVDGKLSIQCYLSALDRCYSVYRKKIRAQWQKEGNDNDFTLNDFGFMISHSPYCKLVQKSLARMFLNDFLNDQNRDKNSIYSGLEAFGDVKLEDTYFDRDVEKAFMKASSELFNQKTKASLLVSNQNGNMYTSSVYGSLASVLAQYSPQQLAGKRIGVFSYGSGLAATLYSLKVTQDATPGSALDKVTASLCDLKSRLDSRTCVAPDVFAENMKLREDTHHLANYIPQCSIDSLFEGTWYLVRVDEKHRRTYARRPSTNDHNLGDGVGLVHSNTATEHIPSPAKKVPRLPATAAESESAVISNGEH.

Ser4 is modified (phosphoserine). Positions 43 and 44 each coordinate (3S)-3-hydroxy-3-methylglutaryl-CoA. Residue 44–46 (AGK) participates in CoA binding. Lys46 bears the N6-acetyllysine mark. Residue Glu95 is the Proton donor/acceptor of the active site. (3S)-3-hydroxy-3-methylglutaryl-CoA is bound by residues Cys129, Asn167, Thr171, Ser221, and His264. The active-site Acyl-thioester intermediate is Cys129. Asn167 contacts CoA. CoA is bound at residue Ser221. The active-site Proton donor/acceptor is the His264. 2 residues coordinate CoA: Lys269 and Lys273. Residues Lys273, Asn343, and Ser377 each contribute to the (3S)-3-hydroxy-3-methylglutaryl-CoA site. Lys273 carries the N6-acetyllysine modification. A disordered region spans residues 486–520 (SNTATEHIPSPAKKVPRLPATAAESESAVISNGEH). 2 positions are modified to phosphoserine: Ser495 and Ser516.

It belongs to the thiolase-like superfamily. HMG-CoA synthase family. Homodimer.

The protein localises to the cytoplasm. The catalysed reaction is acetoacetyl-CoA + acetyl-CoA + H2O = (3S)-3-hydroxy-3-methylglutaryl-CoA + CoA + H(+). It participates in metabolic intermediate biosynthesis; (R)-mevalonate biosynthesis; (R)-mevalonate from acetyl-CoA: step 2/3. In terms of biological role, this enzyme condenses acetyl-CoA with acetoacetyl-CoA to form HMG-CoA, which is converted by HMG-CoA reductase (HMGCR) into mevalonate, a precursor for cholesterol synthesis. This Cricetulus griseus (Chinese hamster) protein is Hydroxymethylglutaryl-CoA synthase, cytoplasmic.